The chain runs to 580 residues: MRTYAIRPVSNRLPGPIEPKKHRRDRDNSTTGSLYNALIHPVQGEKTITSTMIRVAEFQPFLNTISVLQVLAAIFIGALTYRLIDAFFLSPLRSIPGPLLARLTTKRANVDTFSGKVTQTVDKDVARYGDVYVYKPRAVCINHPDDIRAVLGSQEFRKAAFFDIFNDGNTPNIVSLREPELANRRRRQLGPFFNYAYLGRAEPLILQHGYQAIRTKWDALIQANSGRPTEVNYRTDTQLVTFDIMSALAFGRNFNAISRGSSSIMKWAGLIMEMLESPAVLALLSLLPFSLIMRPWKIMYRELAAFSSDAVDMRKQLLAEDSTEKPLDMLQAFIDAEDPESKIKMSPHEVQAESIMMMLAGSETTSSAIMWTFHLLLLYPETLRRAVHEVRSAFSLNHLVTYKDVRSSLPYVEACVYEALRHSPTTAGLTPRISHSTGITLQGYYIPPGTEIYVNLRSPSMHPSLWDDPARFNPDRFLDSDNNKRLLFTFSYGPRNCLGRNLAWVEMLTIVANVLKDYDIALTEDSLFGPHCTDENGLPVLMPAKCFIASFPAKPERDCRMVITRRMAGVKACAREYSPC.

The interval 1–32 (MRTYAIRPVSNRLPGPIEPKKHRRDRDNSTTG) is disordered. Asn28 carries an N-linked (GlcNAc...) asparagine glycan. Residues 61 to 81 (FLNTISVLQVLAAIFIGALTY) traverse the membrane as a helical segment. Heme is bound at residue Cys497.

It belongs to the cytochrome P450 family. It depends on heme as a cofactor.

It localises to the membrane. It functions in the pathway mycotoxin biosynthesis. Functionally, cytochrome P450 monooxygenase; part of the gene cluster that mediates the biosynthesis of helvolic acid, an antibacterial nortriterpenoid. Protostadienol synthase helA cyclizes (3S)-oxidosqualene to (17Z)-protosta-17(20),24-dien-3-beta-ol (protostadienol). The synthesis of protostadienol is followed by several steps of monooxygenation, dehydrogenation, and acyl transfer to yield the final helvolic acid. Following the cyclization to the tetracyclic protostadienol by helA, cytochrome P450 monooxygenases helB1-mediated and helB2-mediated oxidation at C-4 and C-16, acyltransferase helD2-dependent acetylation of 16-OH, oxidation of C-21 by cytochrome P450 monooxygenase helB4, and short chain dehydrogenase helC-dependent oxidative decarboxylation yield the fusidane skeleton. This intermediate is further modified in three additional steps mediated by the cytochrome P450 monooxygenase helB3, the acyltransferase helD1, and the 3-ketosteroid 1-dehydrogenase helE to give helvolic acid. Compared with the late stages in the biosynthesis of helvolic acid, enzymes involved in the early stage modifications act in a relatively strict order. The hydroxylation of C-16 by helB1 and subsequent acetylation by helD2 should occur before the helB3-mediated oxidation of C-21. C-4 demethylation in fusidane-type antibiotics proceeds in an unusual manner though it is also achieved by oxidative decarboxylation. The methyl group at C-4 beta position is oxidized by helB1 and subsequently removed by the short chain dehydrogenase helC. The chain is Cytochrome P450 monooxygenase helB1 from Aspergillus fumigatus (strain ATCC MYA-4609 / CBS 101355 / FGSC A1100 / Af293) (Neosartorya fumigata).